A 321-amino-acid chain; its full sequence is UDP-3-O-acylglucosamine N-acyltransferase (321 aa).

Histidine 231 acts as the Proton acceptor in catalysis.

The protein belongs to the transferase hexapeptide repeat family. LpxD subfamily. As to quaternary structure, homotrimer.

It catalyses the reaction a UDP-3-O-[(3R)-3-hydroxyacyl]-alpha-D-glucosamine + a (3R)-hydroxyacyl-[ACP] = a UDP-2-N,3-O-bis[(3R)-3-hydroxyacyl]-alpha-D-glucosamine + holo-[ACP] + H(+). The protein operates within bacterial outer membrane biogenesis; LPS lipid A biosynthesis. Catalyzes the N-acylation of UDP-3-O-acylglucosamine using 3-hydroxyacyl-ACP as the acyl donor. Is involved in the biosynthesis of lipid A, a phosphorylated glycolipid that anchors the lipopolysaccharide to the outer membrane of the cell. This chain is UDP-3-O-acylglucosamine N-acyltransferase, found in Campylobacter jejuni subsp. jejuni serotype O:2 (strain ATCC 700819 / NCTC 11168).